Consider the following 482-residue polypeptide: ADP-ribosylation factor GTPase-activating protein effector protein 1 (482 aa).

The segment at 116–156 is disordered; it reads QHKSTHSHHINHQTHPIHSSSSNSNSNNRIPTKTDSSKQHT. The span at 118-127 shows a compositional bias: basic residues; sequence KSTHSHHINH. The segment covering 134–143 has biased composition (low complexity); that stretch reads SSSSNSNSNN. Residues 170–297 form the Arf-GAP domain; sequence DELLSIVRKI…FVIDSNQGRE (128 aa). Residues 186–210 form a C4-type zinc finger; sequence CCDCGSTATVEWVSINLLCILCIKC.

The protein resides in the cytoplasm. GTPase-activating protein (GAP) for the ADP ribosylation factors ARF1 and ARF2. May be involved in the endocytic pathway. This chain is ADP-ribosylation factor GTPase-activating protein effector protein 1 (AGE1), found in Saccharomyces cerevisiae (strain ATCC 204508 / S288c) (Baker's yeast).